We begin with the raw amino-acid sequence, 206 residues long: GDT1-like protein sll0615 (206 aa).

The next 5 membrane-spanning stretches (helical) occupy residues 36–56 (WVLV…VLMG), 58–78 (IFTF…FLIF), 114–134 (IVPR…VAEW), 151–171 (AWGV…IAVM), and 185–205 (VTLI…WTKI).

The protein belongs to the GDT1 family.

It localises to the cell membrane. This Synechocystis sp. (strain ATCC 27184 / PCC 6803 / Kazusa) protein is GDT1-like protein sll0615.